A 548-amino-acid chain; its full sequence is Chaperonin GroEL (548 aa).

ATP contacts are provided by residues 29–32, K50, 86–90, G414, 478–480, and D494; these read TMGP, DGTTT, and NAA.

The protein belongs to the chaperonin (HSP60) family. Forms a cylinder of 14 subunits composed of two heptameric rings stacked back-to-back. Interacts with the co-chaperonin GroES.

Its subcellular location is the cytoplasm. The enzyme catalyses ATP + H2O + a folded polypeptide = ADP + phosphate + an unfolded polypeptide.. In terms of biological role, together with its co-chaperonin GroES, plays an essential role in assisting protein folding. The GroEL-GroES system forms a nano-cage that allows encapsulation of the non-native substrate proteins and provides a physical environment optimized to promote and accelerate protein folding. The protein is Chaperonin GroEL of Legionella pneumophila (strain Paris).